A 156-amino-acid polypeptide reads, in one-letter code: Cell division protein SepF (156 aa).

Residues 15 to 58 (SDVVPEDEDDEVIDEEPESSFDTDRSVTPIPAASTQPSTSQRKS) form a disordered region. Over residues 18 to 35 (VPEDEDDEVIDEEPESSF) the composition is skewed to acidic residues. Polar residues predominate over residues 47–57 (ASTQPSTSQRK).

The protein belongs to the SepF family. In terms of assembly, homodimer. Interacts with FtsZ.

It is found in the cytoplasm. Cell division protein that is part of the divisome complex and is recruited early to the Z-ring. Probably stimulates Z-ring formation, perhaps through the cross-linking of FtsZ protofilaments. Its function overlaps with FtsA. The protein is Cell division protein SepF of Bifidobacterium animalis subsp. lactis (strain AD011).